The chain runs to 65 residues: LTCLICPEKYCNKVHTCRNGEKICFKKFDQRKLLGKRYIRGCAATCPEAKPREIVECCSTDKCNH.

5 cysteine pairs are disulfide-bonded: C3–C24, C6–C11, C17–C42, C46–C57, and C58–C63.

This sequence belongs to the three-finger toxin family. Ancestral subfamily. Orphan group II sub-subfamily. Expressed by the venom gland.

Its subcellular location is the secreted. Its function is as follows. Binds to muscle and neuronal nicotinic acetylcholine receptors (nAChR). It binds to extracellular domain of rat alpha-7/CHRNA7 nAChR (IC(50)=2.2 uM) and to Torpedo californica membranes (IC(50)=30 uM). This is Oxiana weak toxin from Naja oxiana (Central Asian cobra).